The sequence spans 421 residues: Gamma-glutamyl phosphate reductase (421 aa).

It belongs to the gamma-glutamyl phosphate reductase family.

Its subcellular location is the cytoplasm. The catalysed reaction is L-glutamate 5-semialdehyde + phosphate + NADP(+) = L-glutamyl 5-phosphate + NADPH + H(+). Its pathway is amino-acid biosynthesis; L-proline biosynthesis; L-glutamate 5-semialdehyde from L-glutamate: step 2/2. Its function is as follows. Catalyzes the NADPH-dependent reduction of L-glutamate 5-phosphate into L-glutamate 5-semialdehyde and phosphate. The product spontaneously undergoes cyclization to form 1-pyrroline-5-carboxylate. In Pseudomonas fluorescens (strain SBW25), this protein is Gamma-glutamyl phosphate reductase.